We begin with the raw amino-acid sequence, 480 residues long: ATP synthase subunit beta (480 aa).

153-160 (GGAGVGKT) is a binding site for ATP.

The protein belongs to the ATPase alpha/beta chains family. As to quaternary structure, F-type ATPases have 2 components, CF(1) - the catalytic core - and CF(0) - the membrane proton channel. CF(1) has five subunits: alpha(3), beta(3), gamma(1), delta(1), epsilon(1). CF(0) has three main subunits: a(1), b(2) and c(9-12). The alpha and beta chains form an alternating ring which encloses part of the gamma chain. CF(1) is attached to CF(0) by a central stalk formed by the gamma and epsilon chains, while a peripheral stalk is formed by the delta and b chains.

The protein resides in the cell membrane. It carries out the reaction ATP + H2O + 4 H(+)(in) = ADP + phosphate + 5 H(+)(out). Its function is as follows. Produces ATP from ADP in the presence of a proton gradient across the membrane. The catalytic sites are hosted primarily by the beta subunits. The protein is ATP synthase subunit beta of Lactobacillus gasseri (strain ATCC 33323 / DSM 20243 / BCRC 14619 / CIP 102991 / JCM 1131 / KCTC 3163 / NCIMB 11718 / NCTC 13722 / AM63).